The sequence spans 667 residues: Heat shock protein DDB_G0283913 (667 aa).

2 helical membrane-spanning segments follow: residues 2 to 22 and 224 to 244; these read FVGTLVIIICTTLIIIIKKIL and MFICDMSFSLASIIVYVLNEL. Residues 18 to 82 are a coiled coil; the sequence is IKKILKRKKE…ELAKKLNCYI (65 aa). Residues 432-478 are disordered; that stretch reads IDDTIQDNDKSGSEVSTPTISSSSSSPLQPIIKDEKDDNIENKSDEA. Low complexity predominate over residues 444–457; that stretch reads SEVSTPTISSSSSS. Residues 463 to 477 show a composition bias toward basic and acidic residues; the sequence is IKDEKDDNIENKSDE. In terms of domain architecture, sHSP spans 551 to 667; that stretch reads MVFSSGFKPF…VITFKFEKIG (117 aa).

The protein belongs to the small heat shock protein (HSP20) family.

Its subcellular location is the membrane. This chain is Heat shock protein DDB_G0283913, found in Dictyostelium discoideum (Social amoeba).